A 235-amino-acid polypeptide reads, in one-letter code: Large ribosomal subunit protein uL1 (235 aa).

This sequence belongs to the universal ribosomal protein uL1 family. As to quaternary structure, part of the 50S ribosomal subunit.

In terms of biological role, binds directly to 23S rRNA. The L1 stalk is quite mobile in the ribosome, and is involved in E site tRNA release. Functionally, protein L1 is also a translational repressor protein, it controls the translation of the L11 operon by binding to its mRNA. The polypeptide is Large ribosomal subunit protein uL1 (Synechococcus sp. (strain WH7803)).